The primary structure comprises 314 residues: Dihydroorotate dehydrogenase (fumarate) (314 aa).

Substrate contacts are provided by residues Lys-46, 70 to 74, and Asn-130; that span reads NSMGL. 46-47 serves as a coordination point for FMN; it reads KS. Position 130 (Asn-130) interacts with FMN. Active-site nucleophile residues include Ser-132 and Cys-133. Lys-167 and Ile-195 together coordinate FMN. 196–197 contributes to the substrate binding site; it reads NS. Residues Gly-224, 252–253, and 274–275 contribute to the FMN site; these read GG and GT.

It belongs to the dihydroorotate dehydrogenase family. Type 1 subfamily. Homodimer. The cofactor is FMN.

The protein localises to the cytoplasm. It carries out the reaction (S)-dihydroorotate + fumarate = orotate + succinate. Its pathway is pyrimidine metabolism; UMP biosynthesis via de novo pathway. Its function is as follows. Catalyzes the conversion of dihydroorotate to orotate with fumarate as the electron acceptor. The sequence is that of Dihydroorotate dehydrogenase (fumarate) (URA1) from Saccharomyces mikatae (Yeast).